A 135-amino-acid chain; its full sequence is Transcription antitermination protein NusB (135 aa).

The protein belongs to the NusB family.

In terms of biological role, involved in transcription antitermination. Required for transcription of ribosomal RNA (rRNA) genes. Binds specifically to the boxA antiterminator sequence of the ribosomal RNA (rrn) operons. This is Transcription antitermination protein NusB from Lacticaseibacillus casei (strain BL23) (Lactobacillus casei).